The primary structure comprises 426 residues: MKFVLAVHGTRGDVEPCAAVGVELRRRGHAVHMAVPPNLIEFVESAGLTGVAYGPDSDEQINTVAAFVRNLTRAQNPLNLARAVKELFVEGWAEMGTTLTTLADGADLVMTGQTYHGVAANVAEYYDIPAAALHHFPMQVNGQIAIPSIPTPATLVRATMKVSWRLYAYVSKDADRAQRRELGLPPAPAPAVRRLAERGAPEIQAYDPVFFPGLAAEWSDRRPFVGPLTMELHSEPNEELESWIAAGTPPIYFGFGSTPVQTPVQTLAMISDVCAQLGERALIYSPAANSTRIRHADHVKRVGLVNYSTILPKCRAVVHHGGAGTTAAGLRAGMPTLILWDVADQPIWAGAVQRLKVGSAKRFTNITRGSLLKELRSILAPECAARAREISTRMTRPTAAVTAAADLLEATARQTPGSTPSSSPGR.

It to M.leprae L518_C2_147 and M.tuberculosis Rv1524.

This is an uncharacterized protein from Mycobacterium tuberculosis (strain CDC 1551 / Oshkosh).